The chain runs to 201 residues: Lipopolysaccharide core heptose(II)-phosphate phosphatase (201 aa).

An N-terminal signal peptide occupies residues 1 to 35 (MLAFTLRFIKNKRYFAILAGALVIIAGLTSQHAWS).

The protein belongs to the phosphoglycerate mutase family. Ais subfamily.

The protein resides in the periplasm. Its pathway is bacterial outer membrane biogenesis; lipopolysaccharide metabolism. Its function is as follows. Catalyzes the dephosphorylation of heptose(II) of the outer membrane lipopolysaccharide core. This chain is Lipopolysaccharide core heptose(II)-phosphate phosphatase, found in Salmonella enteritidis PT4 (strain P125109).